A 475-amino-acid polypeptide reads, in one-letter code: MSRRKAGSAPRRVEPAPAANPDDEMEMQDLVIELKPEPDAQPQQAPRLGPFSPKEVSSAGRFGGEPHHSPGPMPAGAALLALGPRNPWTLWTPLTPNYPDRQPWTDKHPDLLTCGRCLQTFPLEAITAFMDHKKLGCQLFRGPSRGQGSEREELKALSCLRCGKQFTVAWKLLRHAQWDHGLSIYQTESEAPEAPLLGLAEVAAAVSAVVGPAAEAKSPRASGSGLTRRSPTCPVCKKTLSSFSNLKVHMRSHTGERPYACDQCPYACAQSSKLNRHKKTHRQVPPQSPLMADTSQEQASAAPPEPAVHAAAPTSTLPCSGGEGAGAAATAGVQEPGAPGSGAQAGPGGDTWGAITTEQRTDPANSQKASPKKMPKSGGKSRGPGGSCEFCGKHFTNSSNLTVHRRSHTGERPYTCEFCNYACAQSSKLNRHRRMHGMTPGSTRFECPHCHVPFGLRATLDKHLRQKHPEAAGEA.

The disordered stretch occupies residues 1 to 78; the sequence is MSRRKAGSAP…SPGPMPAGAA (78 aa). Lysine 35 participates in a covalent cross-link: Glycyl lysine isopeptide (Lys-Gly) (interchain with G-Cter in SUMO2). 3 consecutive C2H2-type zinc fingers follow at residues 157-180, 231-253, and 259-281; these read LSCL…QWDH, PTCP…MRSH, and YACD…KKTH. The interval 275-385 is disordered; that stretch reads NRHKKTHRQV…KSGGKSRGPG (111 aa). 2 stretches are compositionally biased toward low complexity: residues 295–313 and 326–338; these read SQEQ…AAAP and GAAA…EPGA. Residues 339 to 351 show a composition bias toward gly residues; it reads PGSGAQAGPGGDT. Residues 354–367 are compositionally biased toward polar residues; it reads AITTEQRTDPANSQ. C2H2-type zinc fingers lie at residues 386 to 408, 414 to 436, and 445 to 468; these read GSCE…RRSH, YTCE…RRMH, and FECP…RQKH.

This sequence belongs to the krueppel C2H2-type zinc-finger protein family. Interacts with KLF4.

It localises to the nucleus. In terms of biological role, may be a transcriptional corepressor with KLF4. The protein is Zinc finger protein 296 (ZNF296) of Homo sapiens (Human).